The following is a 255-amino-acid chain: Leucyl/phenylalanyl-tRNA--protein transferase (255 aa).

The protein belongs to the L/F-transferase family.

It localises to the cytoplasm. The catalysed reaction is N-terminal L-lysyl-[protein] + L-leucyl-tRNA(Leu) = N-terminal L-leucyl-L-lysyl-[protein] + tRNA(Leu) + H(+). The enzyme catalyses N-terminal L-arginyl-[protein] + L-leucyl-tRNA(Leu) = N-terminal L-leucyl-L-arginyl-[protein] + tRNA(Leu) + H(+). It carries out the reaction L-phenylalanyl-tRNA(Phe) + an N-terminal L-alpha-aminoacyl-[protein] = an N-terminal L-phenylalanyl-L-alpha-aminoacyl-[protein] + tRNA(Phe). In terms of biological role, functions in the N-end rule pathway of protein degradation where it conjugates Leu, Phe and, less efficiently, Met from aminoacyl-tRNAs to the N-termini of proteins containing an N-terminal arginine or lysine. The protein is Leucyl/phenylalanyl-tRNA--protein transferase of Burkholderia pseudomallei (strain 668).